The sequence spans 353 residues: Photosystem II protein D1 (353 aa).

Thr2 is modified (N-acetylthreonine). A Phosphothreonine modification is found at Thr2. Transmembrane regions (helical) follow at residues 29 to 46 (YIGWFGVLMIPTLLTATS), 118 to 133 (HFLLGVACYMGREWEL), and 142 to 156 (WIAVAYSAPVAAATA). His118 is a binding site for chlorophyll a. Pheophytin a is bound at residue Tyr126. Positions 170 and 189 each coordinate [CaMn4O5] cluster. A helical membrane pass occupies residues 197–218 (FHMLGVAGVFGGSLFSAMHGSL). Residue His198 participates in chlorophyll a binding. A quinone is bound by residues His215 and 264-265 (SF). Residue His215 coordinates Fe cation. His272 provides a ligand contact to Fe cation. Residues 274 to 288 (FLAAWPVIGIWFTAL) form a helical membrane-spanning segment. The [CaMn4O5] cluster site is built by His332, Glu333, Asp342, and Ala344. A propeptide spanning residues 345 to 353 (AIEAPSTNG) is cleaved from the precursor.

The protein belongs to the reaction center PufL/M/PsbA/D family. In terms of assembly, PSII is composed of 1 copy each of membrane proteins PsbA, PsbB, PsbC, PsbD, PsbE, PsbF, PsbH, PsbI, PsbJ, PsbK, PsbL, PsbM, PsbT, PsbX, PsbY, PsbZ, Psb30/Ycf12, at least 3 peripheral proteins of the oxygen-evolving complex and a large number of cofactors. It forms dimeric complexes. Requires The D1/D2 heterodimer binds P680, chlorophylls that are the primary electron donor of PSII, and subsequent electron acceptors. It shares a non-heme iron and each subunit binds pheophytin, quinone, additional chlorophylls, carotenoids and lipids. D1 provides most of the ligands for the Mn4-Ca-O5 cluster of the oxygen-evolving complex (OEC). There is also a Cl(-1) ion associated with D1 and D2, which is required for oxygen evolution. The PSII complex binds additional chlorophylls, carotenoids and specific lipids. as cofactor. Tyr-161 forms a radical intermediate that is referred to as redox-active TyrZ, YZ or Y-Z. Post-translationally, C-terminally processed by CTPA; processing is essential to allow assembly of the oxygen-evolving complex and thus photosynthetic growth.

The protein localises to the plastid. The protein resides in the chloroplast thylakoid membrane. It catalyses the reaction 2 a plastoquinone + 4 hnu + 2 H2O = 2 a plastoquinol + O2. In terms of biological role, photosystem II (PSII) is a light-driven water:plastoquinone oxidoreductase that uses light energy to abstract electrons from H(2)O, generating O(2) and a proton gradient subsequently used for ATP formation. It consists of a core antenna complex that captures photons, and an electron transfer chain that converts photonic excitation into a charge separation. The D1/D2 (PsbA/PsbD) reaction center heterodimer binds P680, the primary electron donor of PSII as well as several subsequent electron acceptors. This Amaranthus hybridus (Slim amaranth) protein is Photosystem II protein D1.